Here is a 358-residue protein sequence, read N- to C-terminus: Replication factor C subunit 5 (358 aa).

The protein belongs to the activator 1 small subunits family. Heteropentamer of subunits rfc1, rfc2, rfc3, rfc4 and rfc5 that forms a complex (RFC) with PCNA in the presence of ATP. Two other complexes exist where rfc1 can be replaced by either ctf18 or elg1 to form the ctf18-RFC or the elg1-RFC complexes respectively.

The protein localises to the nucleus. Its function is as follows. The elongation of primed DNA templates by DNA polymerase delta and epsilon requires the action of the accessory proteins PCNA and activator 1. This chain is Replication factor C subunit 5 (rfc5), found in Schizosaccharomyces pombe (strain 972 / ATCC 24843) (Fission yeast).